Reading from the N-terminus, the 164-residue chain is Putative Cys-tRNA(Pro)/Cys-tRNA(Cys) deacylase EbsC (164 aa).

Belongs to the prolyl-tRNA editing family. YbaK/EbsC subfamily.

Functionally, affects the expression of the receptor, named binding substance, that mediates mating aggregate formation. Could be a regulatory protein that suppresses the function or expression of ebsA and/or ebsMB. This is Putative Cys-tRNA(Pro)/Cys-tRNA(Cys) deacylase EbsC from Enterococcus faecalis (strain ATCC 700802 / V583).